Here is a 109-residue protein sequence, read N- to C-terminus: MMGGRGTGGKWPSAFGLLLLWGVAASALPLESGPTGQDSVQEATEGRSGLLTFLAWWHEWASQASSSTPVGGGTPGLSKSQERPPPQQPPHLDKKPCKNFFWKTFSSCK.

Positions 1–25 are cleaved as a signal peptide; that stretch reads MMGGRGTGGKWPSAFGLLLLWGVAA. The propeptide occupies 26–93; sequence SALPLESGPT…PPPQQPPHLD (68 aa). Residues 64 to 97 form a disordered region; sequence ASSSTPVGGGTPGLSKSQERPPPQQPPHLDKKPC. A disulfide bridge links C97 with C108.

The protein belongs to the somatostatin family. As to expression, expressed in a subset of GABAergic cells in the cortex and hippocampus.

It is found in the secreted. This chain is Cortistatin (Cort), found in Mus musculus (Mouse).